A 493-amino-acid polypeptide reads, in one-letter code: Betaine aldehyde dehydrogenase (493 aa).

Residues serine 32, isoleucine 33, and aspartate 99 each contribute to the K(+) site. 156–158 (GAW) lines the NAD(+) pocket. The Charge relay system role is filled by lysine 168. NAD(+) contacts are provided by residues 182–185 (KPSE) and 235–238 (SVPT). Leucine 250 lines the K(+) pocket. The active-site Proton acceptor is glutamate 256. Glycine 258, cysteine 290, and glutamate 390 together coordinate NAD(+). The Nucleophile role is filled by cysteine 290. At cysteine 290 the chain carries Cysteine sulfenic acid (-SOH). Lysine 460 and glycine 463 together coordinate K(+). The active-site Charge relay system is glutamate 467.

This sequence belongs to the aldehyde dehydrogenase family. In terms of assembly, dimer of dimers. K(+) is required as a cofactor.

It carries out the reaction betaine aldehyde + NAD(+) + H2O = glycine betaine + NADH + 2 H(+). It participates in amine and polyamine biosynthesis; betaine biosynthesis via choline pathway; betaine from betaine aldehyde: step 1/1. Functionally, involved in the biosynthesis of the osmoprotectant glycine betaine. Catalyzes the irreversible oxidation of betaine aldehyde to the corresponding acid. The sequence is that of Betaine aldehyde dehydrogenase from Agrobacterium fabrum (strain C58 / ATCC 33970) (Agrobacterium tumefaciens (strain C58)).